The sequence spans 237 residues: Small ribosomal subunit protein eS4 (237 aa).

The 73-residue stretch at 38–110 (LPLAVVVRDV…EAKYYDLKPI (73 aa)) folds into the S4 RNA-binding domain.

Belongs to the eukaryotic ribosomal protein eS4 family.

The protein is Small ribosomal subunit protein eS4 of Pyrobaculum calidifontis (strain DSM 21063 / JCM 11548 / VA1).